The following is a 229-amino-acid chain: Type III pantothenate kinase (229 aa).

ATP is bound at residue 6-13 (NIGNSRQH). Residues tyrosine 77 and 81–84 (GIDR) each bind substrate. Aspartate 83 acts as the Proton acceptor in catalysis. Aspartate 103 contributes to the K(+) binding site. Threonine 106 is an ATP binding site. Threonine 159 serves as a coordination point for substrate.

It belongs to the type III pantothenate kinase family. As to quaternary structure, homodimer. The cofactor is NH4(+). It depends on K(+) as a cofactor.

The protein resides in the cytoplasm. It carries out the reaction (R)-pantothenate + ATP = (R)-4'-phosphopantothenate + ADP + H(+). It functions in the pathway cofactor biosynthesis; coenzyme A biosynthesis; CoA from (R)-pantothenate: step 1/5. Its function is as follows. Catalyzes the phosphorylation of pantothenate (Pan), the first step in CoA biosynthesis. This Gloeobacter violaceus (strain ATCC 29082 / PCC 7421) protein is Type III pantothenate kinase.